A 360-amino-acid polypeptide reads, in one-letter code: MTPTLRRKLEALAERREELERLLAEPDVVADNTRFRDLSREFAQLEPIAIALADESRAKADLAAAEGMRADPDLRELADEEIAAAQARLLELEQELALLLVPRDPRDEGNLFLEVRAGTGGDEAAIFAGDLFRMYARYAERQGWKVEIESDNPGEHGGYKEVVARVVGRGAFSRLKFESGTHRVQRVPATESQGRIHTSAATVAIIPEADEVDDIVINPADLKVDTFRSSGAGGQHVNKTESAIRITHVPTGVVVECQTERSQHANRDKAMKRLKAQLLDAERQRQDAAQAESRRLQVGSGDRSQRIRTYNFPQGRITDHRVEGLTLYDLPNILAGDLDPLLQRLSHEHQVDALAQLSAG.

Glutamine 235 is modified (N5-methylglutamine). The tract at residues 281 to 310 (AERQRQDAAQAESRRLQVGSGDRSQRIRTY) is disordered.

Belongs to the prokaryotic/mitochondrial release factor family. Methylated by PrmC. Methylation increases the termination efficiency of RF1.

The protein localises to the cytoplasm. Functionally, peptide chain release factor 1 directs the termination of translation in response to the peptide chain termination codons UAG and UAA. This chain is Peptide chain release factor 1, found in Stenotrophomonas maltophilia (strain K279a).